The following is a 548-amino-acid chain: C2H2-type transcription factor MSN2 (548 aa).

2 C2H2-type zinc fingers span residues 420-448 (FKCELCDRRFRRQEHLKRHYRSLHTQDKP) and 449-471 (FECNECGKKFSRSDNLTQHARTH).

As to quaternary structure, interacts with HOG1/OSM1.

It localises to the nucleus. The protein localises to the cytoplasm. Transcription factor that acts as a key downstream transcription factor in the HOG1-MAPK pathway. Regulates the expression of a series of downstream genes and controls vegetative growth, conidiogenesis, cell wall integrity, stress response, mitochondrial morphology, and pathogenicity. Binds to a putative promoter region 1500 bp upstream of the start codons of the target genes MGG_07019, POX1 and DCI1. Binds to the AGGGG and CCCCT motif of the COS1 promoter region. Involved in fatty acid beta-oxidation by directly regulating the expression of the dienoyl-CoA isomerase DCI1, thereby facilitating invasive hyphal growth during the early infection stage. Targets also the 3-methylglutaconyl-CoA hydratase-encoding gene (AUH1) to control mitochondrial morphology and mitophagy, which are critical for the infectious growth of the pathogen. This is C2H2-type transcription factor MSN2 from Pyricularia oryzae (strain 70-15 / ATCC MYA-4617 / FGSC 8958) (Rice blast fungus).